The chain runs to 257 residues: Beta-fibrinogenase (257 aa).

Residues 1–18 (MVLIRVLANLLLLQLSHA) form the signal peptide. A propeptide spanning residues 19–24 (QKSSEL) is cleaved from the precursor. Residues 25–248 (VVGGDECNIN…YTDWIQSIIA (224 aa)) enclose the Peptidase S1 domain. 6 cysteine pairs are disulfide-bonded: cysteine 31–cysteine 162, cysteine 49–cysteine 65, cysteine 97–cysteine 255, cysteine 141–cysteine 209, cysteine 173–cysteine 188, and cysteine 199–cysteine 224. An N-linked (GlcNAc...) asparagine glycan is attached at asparagine 44. The active-site Charge relay system is histidine 64. N-linked (GlcNAc...) asparagine glycans are attached at residues asparagine 78 and asparagine 102. Catalysis depends on aspartate 109, which acts as the Charge relay system. 2 N-linked (GlcNAc...) asparagine glycosylation sites follow: asparagine 153 and asparagine 169. Serine 203 functions as the Charge relay system in the catalytic mechanism. The N-linked (GlcNAc...) asparagine glycan is linked to asparagine 250.

Monomer. Glycosylated. Contains 23.0% of hexoses, 8.3% of hexosamines and 1.0% of sialic acids. In terms of tissue distribution, expressed by the venom gland.

The protein resides in the secreted. Its activity is regulated as follows. Inhibited by diisopropylfluorophosphate (DFP) and PMSF. Snake venom serine protease that has fibrinogenolytic activities by hydrolyzing the beta chain of fibrinogen (FGB). Typical arginine esterase which hydrolyzes esters and amides of arginine. In Macrovipera lebetinus (Levantine viper), this protein is Beta-fibrinogenase.